The following is a 118-amino-acid chain: MKFQPLGERVLVERLEEENKTSSGIIIPDNAKEKPLMGVVKAVSHKISEGCKCVKEGDVIAFGKYKGTEIVLDGTEYMVLELEDILGIVNAGSCCHANSHDHKDHKHAEACCHDHKKH.

The protein belongs to the GroES chaperonin family. In terms of assembly, heptamer of 7 subunits arranged in a ring. Interacts with the chaperonin GroEL.

It localises to the cytoplasm. In terms of biological role, together with the chaperonin GroEL, plays an essential role in assisting protein folding. The GroEL-GroES system forms a nano-cage that allows encapsulation of the non-native substrate proteins and provides a physical environment optimized to promote and accelerate protein folding. GroES binds to the apical surface of the GroEL ring, thereby capping the opening of the GroEL channel. The protein is Co-chaperonin GroES of Helicobacter acinonychis (strain Sheeba).